The following is a 792-amino-acid chain: MKYNQYAYVETSPEKATEELLAINFLPENYSSLSFSELLAVLTGNVLAEATTRQAKDAKLAEFAVDDQTDLAAFLLDTPTAITASQFANVALQLLGYHPNYDYSLTDPLTCGEKHALPAFKDLTSKEELIFAFYRLLNTRSKNGQILLDVMAGKGYFTQFWGEGKFMLFNGKSLPVFDTSQVIREVVYVQSDLDTDGDGKGDLLPVTVFRPVESQDQLKVPALYTASPYFGGIIDNVKTNHNVDENLTDATTWTNPKYVAKPLVKSPAPSGQDVPATELATGQSSYGLNEYLLARGFASVFSGAIGNRHGDGIRITGSPEETISQKEVIEWLTGDRVAYTDRTRRFETKAGWCSGNVGMTGRSYLGTLQIAIATTGVKGLKTVVSEAAISSWYDYYREHGLVIAPSECQGEDMDKLAEVCQSNLWDGGNFTAKKAYEAEQAELLAAQDRATGQYSDFWESRNYRHHADGIKCSWISVHGLNDWNVKPKNVYKIWQKVKQLPVESHLFLHQGPHYNMNNLVSIDFTDLMNLWFVHELLEVENGAYEQWPKVMIQDNLEADKWHAESDWANDLGQASLYSPTADGYLSTVENGTGQLTFTDLGGTEFKKAGISETDWEYQFISGEKKWAKASLRFESEEFLHPTTLVGRPKVQVRVAANKTVGQLSVALVDLGTRQRLTATPKIFARGNQPFGYRFEADSLQEFVPDKATKAKLITKAHMNLQNYQDMKQPSKLEAGQFVDLEFELQPTYYTLPAGAKLCLIIYSTDQGMTKRPLETEDYTVDLAGTALLLYRK.

Catalysis depends on charge relay system residues Ser363, Asp482, and His513.

This sequence belongs to the peptidase S15 family. Homodimer.

The protein localises to the cytoplasm. It catalyses the reaction Hydrolyzes Xaa-Pro-|- bonds to release unblocked, N-terminal dipeptides from substrates including Ala-Pro-|-p-nitroanilide and (sequentially) Tyr-Pro-|-Phe-Pro-|-Gly-Pro-|-Ile.. In terms of biological role, removes N-terminal dipeptides sequentially from polypeptides having unsubstituted N-termini provided that the penultimate residue is proline. The polypeptide is Xaa-Pro dipeptidyl-peptidase (Lactobacillus delbrueckii subsp. bulgaricus (strain ATCC 11842 / DSM 20081 / BCRC 10696 / JCM 1002 / NBRC 13953 / NCIMB 11778 / NCTC 12712 / WDCM 00102 / Lb 14)).